The sequence spans 339 residues: Phosphoribosylformylglycinamidine cyclo-ligase (339 aa).

The protein belongs to the AIR synthase family.

The protein resides in the cytoplasm. It catalyses the reaction 2-formamido-N(1)-(5-O-phospho-beta-D-ribosyl)acetamidine + ATP = 5-amino-1-(5-phospho-beta-D-ribosyl)imidazole + ADP + phosphate + H(+). It participates in purine metabolism; IMP biosynthesis via de novo pathway; 5-amino-1-(5-phospho-D-ribosyl)imidazole from N(2)-formyl-N(1)-(5-phospho-D-ribosyl)glycinamide: step 2/2. The polypeptide is Phosphoribosylformylglycinamidine cyclo-ligase (Desulfitobacterium hafniense (strain DSM 10664 / DCB-2)).